The chain runs to 462 residues: Exodeoxyribonuclease 7 large subunit (462 aa).

Belongs to the XseA family. Heterooligomer composed of large and small subunits.

It localises to the cytoplasm. The catalysed reaction is Exonucleolytic cleavage in either 5'- to 3'- or 3'- to 5'-direction to yield nucleoside 5'-phosphates.. Its function is as follows. Bidirectionally degrades single-stranded DNA into large acid-insoluble oligonucleotides, which are then degraded further into small acid-soluble oligonucleotides. In Proteus mirabilis (strain HI4320), this protein is Exodeoxyribonuclease 7 large subunit.